A 316-amino-acid polypeptide reads, in one-letter code: BRCA2 and CDKN1A-interacting protein (316 aa).

Residues M1 to E57 form a disordered region. Positions E25–E57 are enriched in acidic residues. Residues S44 and S114 each carry the phosphoserine modification. Residues I61 to K169 are interaction with BRCA2. The tract at residues M163–K261 is interaction with CDKN1A. Phosphoserine is present on S283.

Belongs to the BCP1 family. In terms of assembly, interacts with BRCA2, CDKN1A and MTDH/LYRIC. Interacts with DCTN1/p150-glued and ACTR1A/ARP1. Interacts with alpha-, beta- and gamma-tubulins. Interacts with TENT5C; the interaction has no effect on TENT5C poly(A) polymerase function. In terms of tissue distribution, expressed in the testes (at protein level).

The protein localises to the nucleus. It is found in the cytoplasm. It localises to the cytoskeleton. Its subcellular location is the microtubule organizing center. The protein resides in the centrosome. The protein localises to the centriole. It is found in the spindle pole. Its function is as follows. During interphase, required for microtubule organizing and anchoring activities. During mitosis, required for the organization and stabilization of the spindle pole. May promote cell cycle arrest by enhancing the inhibition of CDK2 activity by CDKN1A. May be required for repair of DNA damage by homologous recombination in conjunction with BRCA2. May not be involved in non-homologous end joining (NHEJ). This is BRCA2 and CDKN1A-interacting protein (Bccip) from Mus musculus (Mouse).